The primary structure comprises 314 residues: MAERNYTVVTEFFLTAFTEHLQWRVPLFLIFLSFYLATMLGNTGMILLIRGDRRLHTPMYFFLSHLSLVDICYSSAIIPQMLAVLWEHGTTISQARCAAQFFLFTFFASIDCYLLAIMAYDRYTAVCQPLLYVTIITEKARWGLVTGAYVAGFFSAFVRTVTAFTLSFCGNNEINFIFCDLPPLLKLSCGDSYTQEVVIIVFALFVMPACILVILVSYLFIIVAILQIHSAGGRAKTFSTCASHLTAVALFFGTLIFMYLRDNTGQSSEGDRVVSVLYTVVTPMLNPLIYSLRNKEVKEATRKALSKSKPARRP.

Residues 1–25 (MAERNYTVVTEFFLTAFTEHLQWRV) are Extracellular-facing. Asn-5 carries an N-linked (GlcNAc...) asparagine glycan. The helical transmembrane segment at 26-46 (PLFLIFLSFYLATMLGNTGMI) threads the bilayer. Over 47–54 (LLIRGDRR) the chain is Cytoplasmic. The chain crosses the membrane as a helical span at residues 55-75 (LHTPMYFFLSHLSLVDICYSS). At 76–99 (AIIPQMLAVLWEHGTTISQARCAA) the chain is on the extracellular side. A disulfide bridge connects residues Cys-97 and Cys-189. A helical transmembrane segment spans residues 100–120 (QFFLFTFFASIDCYLLAIMAY). Topologically, residues 121 to 139 (DRYTAVCQPLLYVTIITEK) are cytoplasmic. A helical membrane pass occupies residues 140-160 (ARWGLVTGAYVAGFFSAFVRT). Residues 161–197 (VTAFTLSFCGNNEINFIFCDLPPLLKLSCGDSYTQEV) lie on the Extracellular side of the membrane. Residues 198-217 (VIIVFALFVMPACILVILVS) form a helical membrane-spanning segment. At 218-237 (YLFIIVAILQIHSAGGRAKT) the chain is on the cytoplasmic side. A helical transmembrane segment spans residues 238–258 (FSTCASHLTAVALFFGTLIFM). At 259 to 271 (YLRDNTGQSSEGD) the chain is on the extracellular side. Residues 272-292 (RVVSVLYTVVTPMLNPLIYSL) traverse the membrane as a helical segment. Topologically, residues 293–314 (RNKEVKEATRKALSKSKPARRP) are cytoplasmic.

This sequence belongs to the G-protein coupled receptor 1 family.

It localises to the cell membrane. Functionally, odorant receptor. This chain is Olfactory receptor 9Q2 (OR9Q2), found in Homo sapiens (Human).